A 487-amino-acid chain; its full sequence is L-tartrate/succinate antiporter (487 aa).

14 helical membrane passes run 10–30, 33–53, 54–74, 93–113, 137–157, 189–209, 236–256, 292–312, 313–333, 340–360, 370–390, 393–413, 418–438, and 462–482; these read YLAP…AGLE, TWLY…EPVP, GAVV…WLLF, WAVS…FMFG, TLFL…VTPS, IGSY…AIFL, FLGM…LAYV, LMVG…AAMV, GYSV…DIVS, VFFW…TGFI, SLSG…FYLL, FFAS…AAAL, IPLP…SILT, and LGAI…LLWM.

This sequence belongs to the SLC13A/DASS transporter (TC 2.A.47) family. DIT1 subfamily.

It localises to the cell inner membrane. The catalysed reaction is (2R,3R)-tartrate(out) + succinate(in) = (2R,3R)-tartrate(in) + succinate(out). Functionally, catalyzes the uptake of tartrate in exchange for intracellular succinate. Essential for anaerobic L-tartrate fermentation. The sequence is that of L-tartrate/succinate antiporter (ttdT) from Escherichia coli O6:H1 (strain CFT073 / ATCC 700928 / UPEC).